Reading from the N-terminus, the 267-residue chain is MEMO1 family protein MA_0601 (267 aa).

This sequence belongs to the MEMO1 family.

The chain is MEMO1 family protein MA_0601 from Methanosarcina acetivorans (strain ATCC 35395 / DSM 2834 / JCM 12185 / C2A).